Reading from the N-terminus, the 316-residue chain is 2,3-dihydroxyphenylpropionate/2,3-dihydroxicinnamic acid 1,2-dioxygenase (316 aa).

The Proton donor role is filled by H115. The active-site Proton acceptor is H179.

It belongs to the LigB/MhpB extradiol dioxygenase family. As to quaternary structure, homotetramer. Fe(2+) serves as cofactor.

The enzyme catalyses 3-(2,3-dihydroxyphenyl)propanoate + O2 = (2Z,4E)-2-hydroxy-6-oxonona-2,4-dienedioate + H(+). The catalysed reaction is (2E)-3-(2,3-dihydroxyphenyl)prop-2-enoate + O2 = (2Z,4E,7E)-2-hydroxy-6-oxonona-2,4,7-trienedioate + H(+). The protein operates within aromatic compound metabolism; 3-phenylpropanoate degradation. Catalyzes the non-heme iron(II)-dependent oxidative cleavage of 2,3-dihydroxyphenylpropionic acid and 2,3-dihydroxicinnamic acid into 2-hydroxy-6-ketononadienedioate and 2-hydroxy-6-ketononatrienedioate, respectively. The chain is 2,3-dihydroxyphenylpropionate/2,3-dihydroxicinnamic acid 1,2-dioxygenase from Paraburkholderia xenovorans (strain LB400).